The following is a 137-amino-acid chain: Nucleoside diphosphate kinase (137 aa).

Residues lysine 9, phenylalanine 57, arginine 85, threonine 91, arginine 102, and asparagine 112 each coordinate ATP. Catalysis depends on histidine 115, which acts as the Pros-phosphohistidine intermediate.

The protein belongs to the NDK family. As to quaternary structure, homotetramer. Requires Mg(2+) as cofactor.

Its subcellular location is the cytoplasm. It carries out the reaction a 2'-deoxyribonucleoside 5'-diphosphate + ATP = a 2'-deoxyribonucleoside 5'-triphosphate + ADP. It catalyses the reaction a ribonucleoside 5'-diphosphate + ATP = a ribonucleoside 5'-triphosphate + ADP. In terms of biological role, major role in the synthesis of nucleoside triphosphates other than ATP. The ATP gamma phosphate is transferred to the NDP beta phosphate via a ping-pong mechanism, using a phosphorylated active-site intermediate. The protein is Nucleoside diphosphate kinase of Sulfurimonas denitrificans (strain ATCC 33889 / DSM 1251) (Thiomicrospira denitrificans (strain ATCC 33889 / DSM 1251)).